A 633-amino-acid polypeptide reads, in one-letter code: Terminal nucleotidyltransferase 4B (633 aa).

The segment at 1-115 is disordered; it reads MFRSGERPLG…GGGRADGGGG (115 aa). Positions 25 to 34 are enriched in polar residues; that stretch reads ETTNNNNNHH. 2 stretches are compositionally biased toward low complexity: residues 36–52 and 60–70; these read PAAW…ASPV and RPAAALPASES. Over residues 87–98 the composition is skewed to polar residues; that stretch reads ASTYGLNYSLLQ. A compositionally biased stretch (gly residues) spans 103–115; sequence RAAGGGRADGGGG. Residues Asp191 and Asp193 each contribute to the Mg(2+) site. Gly254, Lys279, Ser297, Tyr298, Asn382, and Arg386 together coordinate ATP. The 61-residue stretch at 322 to 382 folds into the PAP-associated domain; the sequence is NYGVLLIEFF…YIEDPLQPGN (61 aa). The interval 484 to 633 is disordered; it reads LGKCRSNASE…RDAPLSELCR (150 aa). The segment covering 492–519 has biased composition (low complexity); that stretch reads SEPLSKHSSNSSSGPVSSSSATQSSSSD. Lys531 participates in a covalent cross-link: Glycyl lysine isopeptide (Lys-Gly) (interchain with G-Cter in SUMO2). Positions 542–552 are enriched in polar residues; the sequence is RVGSQDVSLEV. Ser545 carries the phosphoserine modification. Residues Lys558, Lys573, and Lys587 each participate in a glycyl lysine isopeptide (Lys-Gly) (interchain with G-Cter in SUMO2) cross-link. The span at 559–614 shows a compositional bias: polar residues; sequence MQSTQTTNTPNNANKSQHGSARLFRSSSKGFQGTAQTSHGALMTSKQHQGKSNTQY. The Basic, involved in binding of the RNA primer signature appears at 618-624; that stretch reads KKRRHKR.

The protein belongs to the DNA polymerase type-B-like family. In terms of assembly, component of a nucleolar TRAMP-like complex, an ATP-dependent exosome regulatory complex consisting of a helicase (MTREX), an oligadenylate polymerase (TENT4B or TENT4A), and a substrate specific RNA-binding factor (ZCCHC7 or ZCCHC8). Several TRAMP-like complexes exist with specific compositions and are associated with nuclear, or nucleolar RNA exosomes. It depends on Mg(2+) as a cofactor. The cofactor is Mn(2+).

It is found in the nucleus. The protein localises to the nucleolus. Its subcellular location is the cytoplasm. The enzyme catalyses RNA(n) + ATP = RNA(n)-3'-adenine ribonucleotide + diphosphate. Its function is as follows. Terminal nucleotidyltransferase that catalyzes preferentially the transfer of ATP and GTP on RNA 3' poly(A) tail creating a heterogeneous 3' poly(A) tail leading to mRNAs stabilization by protecting mRNAs from active deadenylation. Also functions as a catalytic subunit of a TRAMP-like complex which has a poly(A) RNA polymerase activity and is involved in a post-transcriptional quality control mechanism. Polyadenylation with short oligo(A) tails is required for the degradative activity of the exosome on several of its nuclear RNA substrates. Doesn't need a cofactor for polyadenylation activity (in vitro). Plays a role in replication-dependent histone mRNA degradation, probably through terminal uridylation of mature histone mRNAs. May play a role in sister chromatid cohesion. The protein is Terminal nucleotidyltransferase 4B of Mus musculus (Mouse).